The primary structure comprises 327 residues: Nocardicin C-9' epimerase (327 aa).

Residue lysine 43 is modified to N6-(pyridoxal phosphate)lysine.

Belongs to the ACC deaminase/D-cysteine desulfhydrase family. Pyridoxal 5'-phosphate serves as cofactor.

It carries out the reaction isonocardicin C = nocardicin C. It catalyses the reaction isonocardicin A = nocardicin A. The protein operates within antibiotic biosynthesis. Functionally, involved in the biosynthesis of the beta-lactam antibiotic nocardicin A. Catalyzes the interconversion of the nocardicin homoseryl side chain in both nocardicin A with isonocardicin A, and nocardicin C with isonocardicin C. The sequence is that of Nocardicin C-9' epimerase from Nocardia uniformis subsp. tsuyamanensis.